A 381-amino-acid chain; its full sequence is Subtilisin NAT (381 aa).

The N-terminal stretch at 1 to 29 (MRSKKLWISLLFALTLIFTMAFSNMSAQA) is a signal peptide. The propeptide occupies 30–106 (AGKSSTEKKY…VEEDHIAHEY (77 aa)). One can recognise an Inhibitor I9 domain in the interval 38 to 103 (KYIVGFKQTM…VAYVEEDHIA (66 aa)). A Peptidase S8 domain is found at 111-380 (PYGISQIKAP…KGLINVQAAA (270 aa)). The active-site Charge relay system is aspartate 138. Aspartate 147 contacts Ca(2+). The active-site Charge relay system is the histidine 170. Residues leucine 181, asparagine 183, isoleucine 185, valine 187, alanine 275, tyrosine 277, threonine 280, and aspartate 303 each coordinate Ca(2+). Serine 327 serves as the catalytic Charge relay system.

Belongs to the peptidase S8 family. In terms of assembly, monomer. Ca(2+) is required as a cofactor.

It localises to the secreted. The enzyme catalyses Hydrolysis of proteins with broad specificity for peptide bonds, and a preference for a large uncharged residue in P1. Hydrolyzes peptide amides.. With respect to regulation, inhibited by PMSF (phenylmethylsulfonyl fluoride). Subtilisin is an extracellular alkaline serine protease, it catalyzes the hydrolysis of proteins and peptide amides. Subtilisin NAT also has fibrinolytic activity. The chain is Subtilisin NAT from Bacillus subtilis subsp. natto.